Here is a 791-residue protein sequence, read N- to C-terminus: Probable phosphoketolase (791 aa).

This sequence belongs to the XFP family. The cofactor is thiamine diphosphate.

This is Probable phosphoketolase from Chlorobaculum tepidum (strain ATCC 49652 / DSM 12025 / NBRC 103806 / TLS) (Chlorobium tepidum).